We begin with the raw amino-acid sequence, 163 residues long: MLKKCVWLAVALCLCLWQFTMGTALAAELTPEVLTVPLNSEGKTITLTEKQYLEGKRLFQYACASCHVGGITKTNPSLDLRTETLALATPPRDNIEGLVDYMKNPTTYDGEQEIAEVHPSLRSADIFPKMRNLTEKDLVAIAGHILVEPKILGDKWGGGKVYY.

A signal peptide spans 1-26 (MLKKCVWLAVALCLCLWQFTMGTALA). The heme c site is built by His-67 and His-118.

Belongs to the cytochrome c family. PsbV subfamily. In terms of assembly, PSII is composed of 1 copy each of membrane proteins PsbA, PsbB, PsbC, PsbD, PsbE, PsbF, PsbH, PsbI, PsbJ, PsbK, PsbL, PsbM, PsbT, PsbX, PsbY, PsbZ, Psb30/Ycf12, peripheral proteins PsbO, CyanoQ (PsbQ), PsbU, PsbV and a large number of cofactors. It forms dimeric complexes. Heme c serves as cofactor.

It is found in the cellular thylakoid membrane. One of the extrinsic, lumenal subunits of photosystem II (PSII). PSII is a light-driven water plastoquinone oxidoreductase, using light energy to abstract electrons from H(2)O, generating a proton gradient subsequently used for ATP formation. The extrinsic proteins stabilize the structure of photosystem II oxygen-evolving complex (OEC), the ion environment of oxygen evolution and protect the OEC against heat-induced inactivation. Low-potential cytochrome c that plays a role in the OEC of PSII. In Thermosynechococcus vestitus (strain NIES-2133 / IAM M-273 / BP-1), this protein is Photosystem II extrinsic protein V.